Consider the following 394-residue polypeptide: Acid ceramidase (394 aa).

Positions 1–18 (MRGQSLLTWVLAAAVTCA) are cleaved as a signal peptide. Cys-30 and Cys-339 form a disulfide bridge. Cys-142 (nucleophile) is an active-site residue. Asn-172, Asn-194, Asn-258, Asn-341, and Asn-347 each carry an N-linked (GlcNAc...) asparagine glycan. A disulfide bridge connects residues Cys-387 and Cys-391.

This sequence belongs to the acid ceramidase family. As to quaternary structure, heterodimer; disulfide-linked. The heterodimer is composed of the disulfide-linked alpha and beta chains produced by autocatalytic cleavage of the precursor. N-glycosylated. Post-translationally, proteolytically cleaved into two chains alpha and beta that remain associated via a disulfide bond. Cleavage gives rise to a conformation change that activates the enzyme. The same catalytic Cys residue mediates the autoproteolytic cleavage and subsequent hydrolysis of lipid substrates. The beta chain may undergo an additional C-terminal processing. As to expression, widely expressed.

It localises to the lysosome. The protein resides in the secreted. The enzyme catalyses an N-acylsphing-4-enine + H2O = sphing-4-enine + a fatty acid. It catalyses the reaction N-dodecanoylsphing-4-enine + H2O = dodecanoate + sphing-4-enine. It carries out the reaction N-(9Z-octadecenoyl)-sphing-4-enine + H2O = sphing-4-enine + (9Z)-octadecenoate. The catalysed reaction is N-tetradecanoylsphing-4-enine + H2O = tetradecanoate + sphing-4-enine. The enzyme catalyses N-hexadecanoylsphing-4-enine + H2O = sphing-4-enine + hexadecanoate. It catalyses the reaction N-octadecanoylsphing-4-enine + H2O = sphing-4-enine + octadecanoate. It carries out the reaction N-dodecanoyl-(4R)-hydroxysphinganine + H2O = (4R)-hydroxysphinganine + dodecanoate. The catalysed reaction is N-(dodecanoyl)-sphinganine + H2O = dodecanoate + sphinganine. The enzyme catalyses N-(acetyl)-sphing-4-enine + H2O = sphing-4-enine + acetate. It catalyses the reaction N-(hexanoyl)sphing-4-enine + H2O = hexanoate + sphing-4-enine. It carries out the reaction N-octanoylsphing-4-enine + H2O = octanoate + sphing-4-enine. The catalysed reaction is N-dodecanoylethanolamine + H2O = dodecanoate + ethanolamine. The protein operates within lipid metabolism; sphingolipid metabolism. Functionally, lysosomal ceramidase that hydrolyzes sphingolipid ceramides into sphingosine and free fatty acids at acidic pH. Ceramides, sphingosine, and its phosphorylated form sphingosine-1-phosphate are bioactive lipids that mediate cellular signaling pathways regulating several biological processes including cell proliferation, apoptosis and differentiation. Has a higher catalytic efficiency towards C12-ceramides versus other ceramides. Also catalyzes the reverse reaction allowing the synthesis of ceramides from fatty acids and sphingosine. For the reverse synthetic reaction, the natural sphingosine D-erythro isomer is more efficiently utilized as a substrate compared to D-erythro-dihydrosphingosine and D-erythro-phytosphingosine, while the fatty acids with chain lengths of 12 or 14 carbons are the most efficiently used. Also has an N-acylethanolamine hydrolase activity. By regulating the levels of ceramides, sphingosine and sphingosine-1-phosphate in the epidermis, mediates the calcium-induced differentiation of epidermal keratinocytes. Also indirectly regulates tumor necrosis factor/TNF-induced apoptosis. By regulating the intracellular balance between ceramides and sphingosine, in adrenocortical cells, probably also acts as a regulator of steroidogenesis. The protein is Acid ceramidase of Mus musculus (Mouse).